Consider the following 1045-residue polypeptide: MALVTVQRSPSVAGSCSNSDGESEDDEGNSKGNDRSECFFAGKGTALVLALKDIPPLTQSERRLSTDSTRSSNSTQSNNSDIQLHLQSMFYLLQREDTLKMAVKLESQRSNRTRYLVIASRSCCRSGTSDRRRHRIMRHHSVKVGGSAGTKSSTSPAVPTQRQLSVEQTATEASSKCDKTADKENATAAGDNKNTSGMEESCLLGIDCNERTTIGLVVPILADTTIHLDGDGGFSVKVYEKTHIFKPVSVQAMWSALQTLHKVSKKARENNFYASGPSHDWLSSYERRIESDQSCLNEWNAMDALESRRPPSPDAIRNKPPEKEETESVIKMKLKAIMMSVDLDEVTSKYIRGRLEEILDMDLGEYKSFIDAEMLVILGQMDAPTKIFEHVYLGSEWNASNLEELQKNGVRHILNVTREIDNFFPGTFEYFNVRVYDDEKTNLLKYWDDTFRYITRAKAEGSKVLVHCKMGVSRSASVVIAYAMKAYQWEFQQALEHVKKRRSCIKPNKNFLNQLETYSGMLDAMKNKEKLQRSKSETNLKSTKDARLLPGSEPTPLIQALNQAKSKSTGEAGVTPDGEEEDGSRMHRRSIAQKSQRRMVRRSSSTSPKTQTAVVTKQQSQSMENLTPERSVAEEPKNMRFPGSNGENYSVTQNQVLHIQKHTPLSVRTRIHDLEAHRADQLPQQPVWTSLTKLITQTSHLGKSVSGSSSGNIDSRRDSSCSDVFSSQVDSVFAKDEGEKRQRRKTHSWTESLGPSGGIVLDPTPQQQKQQSNAILRPRGTRQRELPSRHASWGSGDNRCCLPQRTSSGSYYDSNRNTTAIFEGVIQDLKRSSNCNVIEGVAVAVEPIVGVGEGTVKRTKQKLEESTSLKKRCQEESQELLLEAVDAGQRRCPSLYRSASSAHSPRQRQPLRCNSEELMHTSDIENKNTTPGDHEATVVLRVQGQTLADDQRISGNVQILKQNFEAKAGVVGTGGGGGGGTAAGSGSSSTIATSVSAVAGACSANPGKKTTSHQSLPSSPVAQHANHVSAASNSNSSASNSSDSS.

Over residues Met-1–Asp-20 the composition is skewed to polar residues. Disordered stretches follow at residues Met-1–Arg-35, Thr-58–Ser-80, Lys-143–Asn-194, and Glu-306–Glu-325. The segment covering Thr-66 to Ser-80 has biased composition (low complexity). Residues Gly-149–Ser-174 are compositionally biased toward polar residues. Residues Ser-175 to Asn-185 are compositionally biased toward basic and acidic residues. The 56-residue stretch at Glu-324 to Gly-379 folds into the DEK-C domain. In terms of domain architecture, Tyrosine-protein phosphatase spans Ala-383–Ala-524. Cys-468 serves as the catalytic Phosphocysteine intermediate. Residues Glu-529–Arg-547 are compositionally biased toward basic and acidic residues. 3 disordered regions span residues Glu-529 to Ser-631, Ser-699 to Arg-799, and Ala-1001 to Ser-1045. Residues Ala-560–Thr-569 show a composition bias toward polar residues. Positions Met-586–Arg-601 are enriched in basic residues. The span at Arg-602–Asn-625 shows a compositional bias: polar residues. Positions Ser-704–Ile-713 are enriched in low complexity. Ser-719 carries the post-translational modification Phosphoserine. Residues Cys-721–Val-732 are compositionally biased toward low complexity. Composition is skewed to polar residues over residues Thr-764 to Ala-774 and Lys-1008 to Val-1021. Low complexity predominate over residues Ser-1029–Ser-1045.

It belongs to the protein-tyrosine phosphatase family. In terms of assembly, interacts with actin.

The protein localises to the cytoplasm. Its subcellular location is the cytoskeleton. It catalyses the reaction O-phospho-L-tyrosyl-[protein] + H2O = L-tyrosyl-[protein] + phosphate. The catalysed reaction is O-phospho-L-seryl-[protein] + H2O = L-seryl-[protein] + phosphate. It carries out the reaction O-phospho-L-threonyl-[protein] + H2O = L-threonyl-[protein] + phosphate. In terms of biological role, protein phosphatase which regulates actin filament dynamics. Dephosphorylates and activates the actin binding/depolymerizing factor tsr/cofilin, which subsequently binds to actin filaments and stimulates their disassembly. Required for axon growth. The polypeptide is Protein phosphatase Slingshot (ssh) (Drosophila melanogaster (Fruit fly)).